Reading from the N-terminus, the 708-residue chain is Solute carrier family 15 member 1 (708 aa).

Residues 1–21 traverse the membrane as a helical segment; the sequence is MGMSKSHSFFGYPLSIFFIVV. At 22 to 53 the chain is on the extracellular side; it reads NEFCERFSYYGMRAILILYFTNFISWDDNLST. The N-linked (GlcNAc...) asparagine glycan is linked to asparagine 50. A helical membrane pass occupies residues 54–74; the sequence is AIYHTFVALCYLTPILGALIA. The Cytoplasmic portion of the chain corresponds to 75-82; sequence DSWLGKFK. The chain crosses the membrane as a helical span at residues 83–103; sequence TIVSLSIVYTIGQAVTSVSSI. Residues 104–118 lie on the Extracellular side of the membrane; the sequence is NDLTDHNHDGTPDSL. A helical membrane pass occupies residues 119 to 139; it reads PVHVVLSLIGLALIALGTGGI. Residues 140–161 are Cytoplasmic-facing; that stretch reads KPCVSAFGGDQFEEGQEKQRNR. A helical transmembrane segment spans residues 162–182; it reads FFSIFYLAINAGSLLSTIITP. Residues 183-198 lie on the Extracellular side of the membrane; that stretch reads MLRVQQCGIHSKQACY. The helical transmembrane segment at 199 to 219 threads the bilayer; it reads PLAFGVPAALMAVALIVFVLG. Residues 220-276 lie on the Cytoplasmic side of the membrane; that stretch reads SGMYKKFKPQGNIMGKVAKCIGFAIKNRFRHRSKAFPKREHWLDWAKEKYDERLISQ. The chain crosses the membrane as a helical span at residues 277 to 297; that stretch reads IKMVTRVMFLYIPLPMFWALF. Over 298 to 327 the chain is Extracellular; it reads DQQGSRWTLQATTMSGKIGALEIQPDQMQT. The helical transmembrane segment at 328–348 threads the bilayer; the sequence is VNAILIVIMVPIFDAVLYPLI. At 349–361 the chain is on the cytoplasmic side; sequence AKCGFNFTSLKKM. The helical transmembrane segment at 362–382 threads the bilayer; it reads AVGMVLASMAFVVAAIVQVEI. Residues 383-584 are Extracellular-facing; that stretch reads DKTLPVFPKG…SANTVNMALQ (202 aa). Residues 383-584 form an extracellular domain (ECD) region; the sequence is DKTLPVFPKG…SANTVNMALQ (202 aa). N-linked (GlcNAc...) asparagine glycans are attached at residues asparagine 404, asparagine 408, asparagine 439, asparagine 509, asparagine 514, and asparagine 562. A helical membrane pass occupies residues 585 to 605; that stretch reads IPQYFLLTCGEVVFSVTGLEF. The Cytoplasmic segment spans residues 606-619; sequence SYSQAPSNMKSVLQ. The chain crosses the membrane as a helical span at residues 620–640; sequence AGWLLTVAVGNIIVLIVAGAG. Residues 641–645 are Extracellular-facing; sequence QFSKQ. Residues 646-666 traverse the membrane as a helical segment; sequence WAEYILFAALLLVVCVIFAIM. Over 667–708 the chain is Cytoplasmic; the sequence is ARFYTYINPAEIEAQFDEDEKKNRLEKSNPYFMSGANSQKQM.

This sequence belongs to the major facilitator superfamily. Proton-dependent oligopeptide transporter (POT/PTR) (TC 2.A.17) family. In terms of assembly, interacts (via extracellular domain region) with trypsin. As to expression, expressed in small intestine.

It is found in the apical cell membrane. The enzyme catalyses a dipeptide(out) + H(+)(out) = a dipeptide(in) + H(+)(in). It carries out the reaction an L-amino acid tripeptide(out) + H(+)(out) = an L-amino acid tripeptide(in) + H(+)(in). It catalyses the reaction L-alanyl-L-lysine(out) + H(+)(out) = L-alanyl-L-lysine(in) + H(+)(in). The catalysed reaction is L-alanyl-L-proline(out) + H(+)(out) = L-alanyl-L-proline(in) + H(+)(in). The enzyme catalyses L-alanyl-L-valine(out) + H(+)(out) = L-alanyl-L-valine(in) + H(+)(in). It carries out the reaction carnosine(out) + H(+)(out) = carnosine(in) + H(+)(in). It catalyses the reaction glycyl-L-glutamine(out) + H(+)(out) = glycyl-L-glutamine(in) + H(+)(in). The catalysed reaction is glycyl-L-leucine(out) + H(+)(out) = glycyl-L-leucine(in) + H(+)(in). The enzyme catalyses glycyl-L-proline(out) + H(+)(out) = glycyl-L-proline(in) + H(+)(in). It carries out the reaction glycyl-sarcosine(out) + H(+)(out) = glycyl-sarcosine(in) + H(+)(in). It catalyses the reaction L-leucyl-L-leucine(out) + H(+)(out) = L-leucyl-L-leucine(in) + H(+)(in). The catalysed reaction is L-leucyl-L-proline(out) + H(+)(out) = L-leucyl-L-proline(in) + H(+)(in). The enzyme catalyses L-phenylalanyl-L-leucine(out) + H(+)(out) = L-phenylalanyl-L-leucine(in) + H(+)(in). It carries out the reaction L-phenylalanyl-L-phenylalanine(out) + H(+)(out) = L-phenylalanyl-L-phenylalanine(in) + H(+)(in). It catalyses the reaction L-lysyl-glycine(out) + H(+)(out) = L-lysyl-glycine(in) + H(+)(in). The catalysed reaction is L-tyrosylglycine(out) + H(+)(out) = L-tyrosylglycine(in) + H(+)(in). The enzyme catalyses L-alanyl-L-aspartate(out) + 2 H(+)(out) = L-alanyl-L-aspartate(in) + 2 H(+)(in). It carries out the reaction L-aspartyl-glycine(out) + 2 H(+)(out) = L-aspartyl-glycine(in) + 2 H(+)(in). It catalyses the reaction glycyl-L-aspartate(out) + 2 H(+)(out) = glycyl-L-aspartate(in) + 2 H(+)(in). The catalysed reaction is glycyl-L-glutamate(out) + 2 H(+)(out) = glycyl-L-glutamate(in) + 2 H(+)(in). The enzyme catalyses L-alanyl-L-leucyl-L-alanine(out) + H(+)(out) = L-alanyl-L-leucyl-L-alanine(in) + H(+)(in). It carries out the reaction L-alanyl-L-prolylglycine(out) + H(+)(out) = L-alanyl-L-prolylglycine(in) + H(+)(in). It catalyses the reaction glycylglycyl-L-isoleucine(out) + H(+)(out) = glycylglycyl-L-isoleucine(in) + H(+)(in). The catalysed reaction is glycylglycyl-L-proline(out) + H(+)(out) = glycylglycyl-L-proline(in) + H(+)(in). The enzyme catalyses L-methionyl-L-phenylalanyl-L-methionine(out) + H(+)(out) = L-methionyl-L-phenylalanyl-L-methionine(in) + H(+)(in). It carries out the reaction N-acetyl-D-muramoyl-L-alanyl-D-isoglutamine(out) + 2 H(+)(out) = N-acetyl-D-muramoyl-L-alanyl-D-isoglutamine(in) + 2 H(+)(in). It catalyses the reaction N(alpha)-formyl-L-methionyl-L-leucyl-L-phenylalanine(out) + 2 H(+)(out) = N(alpha)-formyl-L-methionyl-L-leucyl-L-phenylalanine(in) + 2 H(+)(in). Its function is as follows. Electrogenic proton-coupled amino-acid transporter that transports oligopeptides of 2 to 4 amino acids with a preference for dipeptides. Transports neutral and monovalently charged peptides with a proton to peptide stoichiometry of 1:1 or 2:1. Primarily responsible for the absorption of dietary di- and tripeptides from the small intestinal lumen. Mediates transepithelial transport of muramyl and N-formylated bacterial dipeptides contributing to recognition of pathogenic bacteria by the mucosal immune system. This Homo sapiens (Human) protein is Solute carrier family 15 member 1.